The sequence spans 354 residues: Chorismate synthase (354 aa).

An NADP(+)-binding site is contributed by Arg48. FMN contacts are provided by residues 125–127 (RAS), Ala280, 295–299 (KPIPS), and Arg321.

It belongs to the chorismate synthase family. Homotetramer. It depends on FMNH2 as a cofactor.

It catalyses the reaction 5-O-(1-carboxyvinyl)-3-phosphoshikimate = chorismate + phosphate. It participates in metabolic intermediate biosynthesis; chorismate biosynthesis; chorismate from D-erythrose 4-phosphate and phosphoenolpyruvate: step 7/7. Functionally, catalyzes the anti-1,4-elimination of the C-3 phosphate and the C-6 proR hydrogen from 5-enolpyruvylshikimate-3-phosphate (EPSP) to yield chorismate, which is the branch point compound that serves as the starting substrate for the three terminal pathways of aromatic amino acid biosynthesis. This reaction introduces a second double bond into the aromatic ring system. The polypeptide is Chorismate synthase (Syntrophus aciditrophicus (strain SB)).